The primary structure comprises 132 residues: Small ribosomal subunit protein uS8c (132 aa).

Belongs to the universal ribosomal protein uS8 family. In terms of assembly, part of the 30S ribosomal subunit.

It localises to the plastid. The protein resides in the chloroplast. In terms of biological role, one of the primary rRNA binding proteins, it binds directly to 16S rRNA central domain where it helps coordinate assembly of the platform of the 30S subunit. This chain is Small ribosomal subunit protein uS8c (rps8), found in Pinus thunbergii (Japanese black pine).